The sequence spans 209 residues: Ribonuclease HII (209 aa).

Positions 20–209 constitute an RNase H type-2 domain; that stretch reads DSEIGIDEVG…KSFLNKLNLI (190 aa). Positions 26, 27, and 122 each coordinate a divalent metal cation.

It belongs to the RNase HII family. It depends on Mn(2+) as a cofactor. Mg(2+) serves as cofactor.

It localises to the cytoplasm. It catalyses the reaction Endonucleolytic cleavage to 5'-phosphomonoester.. In terms of biological role, endonuclease that specifically degrades the RNA of RNA-DNA hybrids. The sequence is that of Ribonuclease HII from Prochlorococcus marinus subsp. pastoris (strain CCMP1986 / NIES-2087 / MED4).